Here is a 117-residue protein sequence, read N- to C-terminus: Ribonuclease P protein component (117 aa).

Belongs to the RnpA family. Consists of a catalytic RNA component (M1 or rnpB) and a protein subunit.

It carries out the reaction Endonucleolytic cleavage of RNA, removing 5'-extranucleotides from tRNA precursor.. Its function is as follows. RNaseP catalyzes the removal of the 5'-leader sequence from pre-tRNA to produce the mature 5'-terminus. It can also cleave other RNA substrates such as 4.5S RNA. The protein component plays an auxiliary but essential role in vivo by binding to the 5'-leader sequence and broadening the substrate specificity of the ribozyme. This Lactococcus lactis subsp. cremoris (strain MG1363) protein is Ribonuclease P protein component.